A 200-amino-acid chain; its full sequence is Max dimerization protein 3 (200 aa).

2 disordered regions span residues 31–56 and 133–164; these read SILPCDPATPGRRKRQRTNSNPDNVR and RLLPPNTERIRTDSLDSSNLSSERSDSDQEDL. The bHLH domain maps to 54-106; sequence NVRSVHNELEKHRRAQLRRCLEQLKQQVPLSMENSRHTTLSLLHRAKQHIKKL.

As to quaternary structure, efficient DNA binding requires dimerization with another bHLH protein. Binds DNA as a heterodimer with MAX. In terms of tissue distribution, expressed broadly throughout the CNS and the eye, starting at neurula stages.

It localises to the nucleus. Transcriptional repressor. Binds with MAX to form a sequence-specific DNA-binding protein complex which recognizes the core sequence 5'-CAC[GA]TG-3'. This is Max dimerization protein 3 (mxd3) from Xenopus laevis (African clawed frog).